Consider the following 140-residue polypeptide: FAD synthase (140 aa).

ATP is bound by residues 9 to 10, 14 to 17, N92, and Y119; these read TF and HPGH.

This sequence belongs to the archaeal FAD synthase family. Homodimer. It depends on a divalent metal cation as a cofactor.

It catalyses the reaction FMN + ATP + H(+) = FAD + diphosphate. The protein operates within cofactor biosynthesis; FAD biosynthesis; FAD from FMN: step 1/1. Functionally, catalyzes the transfer of the AMP portion of ATP to flavin mononucleotide (FMN) to produce flavin adenine dinucleotide (FAD) coenzyme. This Methanocorpusculum labreanum (strain ATCC 43576 / DSM 4855 / Z) protein is FAD synthase.